The following is a 590-amino-acid chain: Peroxisomal targeting signal receptor (590 aa).

A Glycyl cysteine thioester (Cys-Gly) (interchain with G-Cter in ubiquitin) cross-link involves residue Cys6. Positions 7-29 (SVGSNPLAQLNKHAQGQGSSLSN) are amphipathic helix 1 (AH1). Residue Lys18 forms a Glycyl lysine isopeptide (Lys-Gly) (interchain with G-Cter in ubiquitin) linkage. The segment covering 18–30 (KHAQGQGSSLSNT) has biased composition (polar residues). Positions 18–45 (KHAQGQGSSLSNTHVRHSGGVSGSNVFR) are disordered. The segment at 56-74 (RQQLNSFMSQPMRLGEDKM) is amphipathic helix 2 (AH2). 3 consecutive short sequence motifs (wxxxF/Y motif) follow at residues 108 to 112 (WTREF), 139 to 143 (WKFRY), and 178 to 182 (WNDKF). The segment at 227–243 (FQEVWDSIQQDTEEMLS) is amphipathic helix 4 (AH4). TPR repeat units follow at residues 285–319 (NPNA…DPKH), 320–353 (VDAW…DPNN), 424–457 (PDIQ…NPND), 459–491 (LMWN…KPSF), and 493–525 (RARY…HDVE).

This sequence belongs to the peroxisomal targeting signal receptor family. In terms of assembly, interacts (via WxxxF/Y and LVxEF motifs) with PEX14; promoting translocation through the PEX13-PEX14 docking complex. Post-translationally, monoubiquitinated at Cys-6 by PEX2 during PEX5 passage through the retrotranslocation channel: monoubiquitination acts as a signal for PEX5 extraction and is required for proper export from peroxisomes and recycling. When PEX5 recycling is compromised, polyubiquitinated at Lys-18 by PEX10 during its passage through the retrotranslocation channel, leading to its degradation.

It is found in the cytoplasm. It localises to the cytosol. The protein resides in the peroxisome matrix. Functionally, receptor that mediates peroxisomal import of proteins containing a C-terminal PTS1-type tripeptide peroxisomal targeting signal (SKL-type). Binds to cargo proteins containing a PTS1 peroxisomal targeting signal in the cytosol, and translocates them into the peroxisome matrix by passing through the PEX13-PEX14 docking complex along with cargo proteins. PEX5 receptor is then retrotranslocated into the cytosol, leading to release of bound cargo in the peroxisome matrix, and reset for a subsequent peroxisome import cycle. This chain is Peroxisomal targeting signal receptor (PEX5), found in Candida glabrata (strain ATCC 2001 / BCRC 20586 / JCM 3761 / NBRC 0622 / NRRL Y-65 / CBS 138) (Yeast).